Reading from the N-terminus, the 841-residue chain is Protein translocase subunit SecA (841 aa).

ATP contacts are provided by residues Gln85, 103 to 107 (GEGKT), and Asp492. A disordered region spans residues 786 to 812 (REEVVQGQTTAHQPQDGDEAKQAKKAP). Zn(2+) contacts are provided by Cys825, Cys827, Cys836, and Cys837.

It belongs to the SecA family. Monomer and homodimer. Part of the essential Sec protein translocation apparatus which comprises SecA, SecYEG and auxiliary proteins SecDF. Other proteins may also be involved. Requires Zn(2+) as cofactor.

The protein localises to the cell membrane. It localises to the cytoplasm. It catalyses the reaction ATP + H2O + cellular proteinSide 1 = ADP + phosphate + cellular proteinSide 2.. Part of the Sec protein translocase complex. Interacts with the SecYEG preprotein conducting channel. Has a central role in coupling the hydrolysis of ATP to the transfer of proteins into and across the cell membrane, serving as an ATP-driven molecular motor driving the stepwise translocation of polypeptide chains across the membrane. The polypeptide is Protein translocase subunit SecA (Bacillus velezensis (strain DSM 23117 / BGSC 10A6 / LMG 26770 / FZB42) (Bacillus amyloliquefaciens subsp. plantarum)).